The sequence spans 375 residues: Chaperone protein DnaJ (375 aa).

The J domain occupies 5 to 70; the sequence is DYYEVLEISR…QKRQAYDRFG (66 aa). Residues 133 to 211 form a CR-type zinc finger; it reads GKEVTIQIPS…CHGHGRVRRN (79 aa). Positions 146, 149, 163, 166, 185, 188, 199, and 202 each coordinate Zn(2+). 4 CXXCXGXG motif repeats span residues 146-153, 163-170, 185-192, and 199-206; these read CEVCRGSG, CATCGGRG, CPQCNGSG, and CTNCHGHG.

It belongs to the DnaJ family. As to quaternary structure, homodimer. Zn(2+) is required as a cofactor.

It is found in the cytoplasm. Participates actively in the response to hyperosmotic and heat shock by preventing the aggregation of stress-denatured proteins and by disaggregating proteins, also in an autonomous, DnaK-independent fashion. Unfolded proteins bind initially to DnaJ; upon interaction with the DnaJ-bound protein, DnaK hydrolyzes its bound ATP, resulting in the formation of a stable complex. GrpE releases ADP from DnaK; ATP binding to DnaK triggers the release of the substrate protein, thus completing the reaction cycle. Several rounds of ATP-dependent interactions between DnaJ, DnaK and GrpE are required for fully efficient folding. Also involved, together with DnaK and GrpE, in the DNA replication of plasmids through activation of initiation proteins. The polypeptide is Chaperone protein DnaJ (Acidithiobacillus ferrooxidans (strain ATCC 23270 / DSM 14882 / CIP 104768 / NCIMB 8455) (Ferrobacillus ferrooxidans (strain ATCC 23270))).